The sequence spans 126 residues: Holo-[acyl-carrier-protein] synthase (126 aa).

Residues Asp-8 and Glu-59 each contribute to the Mg(2+) site.

It belongs to the P-Pant transferase superfamily. AcpS family. The cofactor is Mg(2+).

The protein resides in the cytoplasm. It catalyses the reaction apo-[ACP] + CoA = holo-[ACP] + adenosine 3',5'-bisphosphate + H(+). Functionally, transfers the 4'-phosphopantetheine moiety from coenzyme A to a Ser of acyl-carrier-protein. The polypeptide is Holo-[acyl-carrier-protein] synthase (Rickettsia prowazekii (strain Madrid E)).